The chain runs to 508 residues: Photosystem II CP47 reaction center protein (508 aa).

6 helical membrane passes run 21–36 (AVHI…WAGS), 101–115 (IVFS…IWHW), 140–156 (GIHL…FGAF), 203–218 (IAAG…FHLS), 237–252 (VLSS…AFVV), and 457–472 (SFAL…HGAR).

It belongs to the PsbB/PsbC family. PsbB subfamily. In terms of assembly, PSII is composed of 1 copy each of membrane proteins PsbA, PsbB, PsbC, PsbD, PsbE, PsbF, PsbH, PsbI, PsbJ, PsbK, PsbL, PsbM, PsbT, PsbX, PsbY, PsbZ, Psb30/Ycf12, at least 3 peripheral proteins of the oxygen-evolving complex and a large number of cofactors. It forms dimeric complexes. The cofactor is Binds multiple chlorophylls. PSII binds additional chlorophylls, carotenoids and specific lipids..

The protein resides in the plastid. It localises to the chloroplast thylakoid membrane. One of the components of the core complex of photosystem II (PSII). It binds chlorophyll and helps catalyze the primary light-induced photochemical processes of PSII. PSII is a light-driven water:plastoquinone oxidoreductase, using light energy to abstract electrons from H(2)O, generating O(2) and a proton gradient subsequently used for ATP formation. The protein is Photosystem II CP47 reaction center protein of Buxus microphylla (Littleleaf boxwood).